A 100-amino-acid chain; its full sequence is Large ribosomal subunit protein bL21 (100 aa).

This sequence belongs to the bacterial ribosomal protein bL21 family. Part of the 50S ribosomal subunit. Contacts protein L20.

Functionally, this protein binds to 23S rRNA in the presence of protein L20. This chain is Large ribosomal subunit protein bL21, found in Wolbachia pipientis wMel.